The following is a 309-amino-acid chain: Taste receptor type 2 member 8 (309 aa).

Topologically, residues 1 to 7 (MFSPADN) are extracellular. Residues 8-28 (IFIILITGEFILGILGNGYIA) traverse the membrane as a helical segment. Topologically, residues 29–50 (LVNWIDWIKKKKISTTDYILTN) are cytoplasmic. A helical membrane pass occupies residues 51–71 (LVISRICLISVIVVNGIVTVL). Topologically, residues 72–82 (YPDVYTKSKLQ) are extracellular. A helical transmembrane segment spans residues 83–103 (IAISTFWTFANYLNMWFTTCL). Residues 104 to 131 (NVFYFLKIANSSHPLFLWLKQKIDMVVR) lie on the Cytoplasmic side of the membrane. Residues 132 to 152 (WILLGCFAISLLVSLIIAIVL) form a helical membrane-spanning segment. The Extracellular portion of the chain corresponds to 153 to 184 (SRDYRFHAIAKHKRNITEMFHVSKMLYFEPLT). A glycan (N-linked (GlcNAc...) asparagine) is linked at asparagine 167. The chain crosses the membrane as a helical span at residues 185–205 (LFNLLAIVPFIVSLMSFFLLV). The Cytoplasmic portion of the chain corresponds to 206-239 (RSLQRHTKQIKLYATGGRDPSTEAHVRAIKTMTS). Residues 240–260 (FIFFFFLYYITSLLVTFSYLM) traverse the membrane as a helical segment. Over 261–266 (TKYKLA) the chain is Extracellular. The helical transmembrane segment at 267–287 (MAFGEIVAILYPSGHSFILII) threads the bilayer. Topologically, residues 288-309 (LNNKLRQASVRMLTCIKITCVI) are cytoplasmic.

The protein belongs to the G-protein coupled receptor T2R family.

Its subcellular location is the membrane. Receptor that may play a role in the perception of bitterness and is gustducin-linked. May play a role in sensing the chemical composition of the gastrointestinal content. The activity of this receptor may stimulate alpha gustducin, mediate PLC-beta-2 activation and lead to the gating of TRPM5. The protein is Taste receptor type 2 member 8 (TAS2R8) of Pongo pygmaeus (Bornean orangutan).